The following is a 427-amino-acid chain: Dihydroorotase (427 aa).

H57 and H59 together coordinate Zn(2+). Substrate contacts are provided by residues 59–61 (HLR) and N91. Positions 149, 176, and 229 each coordinate Zn(2+). A substrate-binding site is contributed by N275. D302 lines the Zn(2+) pocket. D302 is an active-site residue. Substrate is bound by residues H306 and 320–321 (FG).

Belongs to the metallo-dependent hydrolases superfamily. DHOase family. Class I DHOase subfamily. The cofactor is Zn(2+).

The catalysed reaction is (S)-dihydroorotate + H2O = N-carbamoyl-L-aspartate + H(+). Its pathway is pyrimidine metabolism; UMP biosynthesis via de novo pathway; (S)-dihydroorotate from bicarbonate: step 3/3. Functionally, catalyzes the reversible cyclization of carbamoyl aspartate to dihydroorotate. The protein is Dihydroorotase of Shouchella clausii (strain KSM-K16) (Alkalihalobacillus clausii).